The primary structure comprises 124 residues: Aspartate 1-decarboxylase (124 aa).

The Schiff-base intermediate with substrate; via pyruvic acid role is filled by Ser-21. Position 21 is a pyruvic acid (Ser) (Ser-21). Thr-53 contacts substrate. Residue Tyr-54 is the Proton donor of the active site. Substrate is bound at residue 69–71 (GAA).

It belongs to the PanD family. As to quaternary structure, heterooctamer of four alpha and four beta subunits. Requires pyruvate as cofactor. In terms of processing, is synthesized initially as an inactive proenzyme, which is activated by self-cleavage at a specific serine bond to produce a beta-subunit with a hydroxyl group at its C-terminus and an alpha-subunit with a pyruvoyl group at its N-terminus.

It localises to the cytoplasm. It catalyses the reaction L-aspartate + H(+) = beta-alanine + CO2. The protein operates within cofactor biosynthesis; (R)-pantothenate biosynthesis; beta-alanine from L-aspartate: step 1/1. In terms of biological role, catalyzes the pyruvoyl-dependent decarboxylation of aspartate to produce beta-alanine. In Dehalococcoides mccartyi (strain ATCC BAA-2266 / KCTC 15142 / 195) (Dehalococcoides ethenogenes (strain 195)), this protein is Aspartate 1-decarboxylase.